The following is a 194-amino-acid chain: Imidazoleglycerol-phosphate dehydratase (194 aa).

The protein belongs to the imidazoleglycerol-phosphate dehydratase family.

The protein localises to the cytoplasm. It catalyses the reaction D-erythro-1-(imidazol-4-yl)glycerol 3-phosphate = 3-(imidazol-4-yl)-2-oxopropyl phosphate + H2O. It participates in amino-acid biosynthesis; L-histidine biosynthesis; L-histidine from 5-phospho-alpha-D-ribose 1-diphosphate: step 6/9. In Oceanobacillus iheyensis (strain DSM 14371 / CIP 107618 / JCM 11309 / KCTC 3954 / HTE831), this protein is Imidazoleglycerol-phosphate dehydratase.